The primary structure comprises 211 residues: Glycerol-3-phosphate acyltransferase (211 aa).

The next 5 helical transmembrane spans lie at 8-28 (YCLA…LILT), 84-104 (LALP…WLGF), 116-136 (VLLA…FAVA), 145-165 (AALC…GMGL), and 170-190 (LAQS…LVFL).

It belongs to the PlsY family. As to quaternary structure, probably interacts with PlsX.

The protein localises to the cell inner membrane. It catalyses the reaction an acyl phosphate + sn-glycerol 3-phosphate = a 1-acyl-sn-glycero-3-phosphate + phosphate. The protein operates within lipid metabolism; phospholipid metabolism. In terms of biological role, catalyzes the transfer of an acyl group from acyl-phosphate (acyl-PO(4)) to glycerol-3-phosphate (G3P) to form lysophosphatidic acid (LPA). This enzyme utilizes acyl-phosphate as fatty acyl donor, but not acyl-CoA or acyl-ACP. This chain is Glycerol-3-phosphate acyltransferase, found in Granulibacter bethesdensis (strain ATCC BAA-1260 / CGDNIH1).